The sequence spans 243 residues: Phosphoribosylaminoimidazole-succinocarboxamide synthase (243 aa).

The protein belongs to the SAICAR synthetase family.

It catalyses the reaction 5-amino-1-(5-phospho-D-ribosyl)imidazole-4-carboxylate + L-aspartate + ATP = (2S)-2-[5-amino-1-(5-phospho-beta-D-ribosyl)imidazole-4-carboxamido]succinate + ADP + phosphate + 2 H(+). The protein operates within purine metabolism; IMP biosynthesis via de novo pathway; 5-amino-1-(5-phospho-D-ribosyl)imidazole-4-carboxamide from 5-amino-1-(5-phospho-D-ribosyl)imidazole-4-carboxylate: step 1/2. The sequence is that of Phosphoribosylaminoimidazole-succinocarboxamide synthase from Lactiplantibacillus plantarum (strain ATCC BAA-793 / NCIMB 8826 / WCFS1) (Lactobacillus plantarum).